We begin with the raw amino-acid sequence, 81 residues long: ATP synthase subunit c, chloroplastic (81 aa).

2 helical membrane passes run 3–23 (PLIA…ASIG) and 57–77 (LAFM…LLFA).

Belongs to the ATPase C chain family. As to quaternary structure, F-type ATPases have 2 components, F(1) - the catalytic core - and F(0) - the membrane proton channel. F(1) has five subunits: alpha(3), beta(3), gamma(1), delta(1), epsilon(1). F(0) has four main subunits: a(1), b(1), b'(1) and c(10-14). The alpha and beta chains form an alternating ring which encloses part of the gamma chain. F(1) is attached to F(0) by a central stalk formed by the gamma and epsilon chains, while a peripheral stalk is formed by the delta, b and b' chains.

The protein resides in the plastid. It localises to the chloroplast thylakoid membrane. Its function is as follows. F(1)F(0) ATP synthase produces ATP from ADP in the presence of a proton or sodium gradient. F-type ATPases consist of two structural domains, F(1) containing the extramembraneous catalytic core and F(0) containing the membrane proton channel, linked together by a central stalk and a peripheral stalk. During catalysis, ATP synthesis in the catalytic domain of F(1) is coupled via a rotary mechanism of the central stalk subunits to proton translocation. Functionally, key component of the F(0) channel; it plays a direct role in translocation across the membrane. A homomeric c-ring of between 10-14 subunits forms the central stalk rotor element with the F(1) delta and epsilon subunits. The sequence is that of ATP synthase subunit c, chloroplastic from Pisum sativum (Garden pea).